The chain runs to 325 residues: GMP reductase (325 aa).

The active-site Thioimidate intermediate is C174. Position 203–226 (203–226 (LIADGGIRTHGDIAKSIRFGASMV)) interacts with NADP(+).

This sequence belongs to the IMPDH/GMPR family. GuaC type 2 subfamily.

The enzyme catalyses IMP + NH4(+) + NADP(+) = GMP + NADPH + 2 H(+). Functionally, catalyzes the irreversible NADPH-dependent deamination of GMP to IMP. It functions in the conversion of nucleobase, nucleoside and nucleotide derivatives of G to A nucleotides, and in maintaining the intracellular balance of A and G nucleotides. In Staphylococcus aureus (strain MRSA252), this protein is GMP reductase.